The sequence spans 390 residues: uncharacterized protein (390 aa).

Transmembrane regions (helical) follow at residues 4-24 (IWLFFSVMFVIGTDTFLLSPL), 40-60 (GWMVSAYALGYALFAFIAGPI), 68-88 (TVMLWGLAGFIVSTFLCGIAP), 98-118 (FAAGVSAAFVTPQIWASIPVI), 130-150 (IATAGLAASQMLGLPIGGFLA), 159-179 (FVLSACSLILLLILAAVMPGI), 205-225 (VILLAYFLFQTGNFASFSFLG), 236-256 (VSQIGAAMLVLGLGNMLGSLI), 273-293 (GMLLMGALYFALPFFPNLFLV), 295-315 (AGFFLTFFTAGIIFPLMMGVF), 329-349 (LSNAAMYAGTTVGTSIAGFLY), and 356-376 (GAVTGFTAILFILSMTLYQTI).

It belongs to the major facilitator superfamily.

It localises to the cell membrane. This is an uncharacterized protein from Bacillus subtilis (strain 168).